The sequence spans 97 residues: DNA-directed RNA polymerase subunit omega (97 aa).

It belongs to the RNA polymerase subunit omega family. In terms of assembly, the RNAP catalytic core consists of 2 alpha, 1 beta, 1 beta' and 1 omega subunit. When a sigma factor is associated with the core the holoenzyme is formed, which can initiate transcription.

It carries out the reaction RNA(n) + a ribonucleoside 5'-triphosphate = RNA(n+1) + diphosphate. Promotes RNA polymerase assembly. Latches the N- and C-terminal regions of the beta' subunit thereby facilitating its interaction with the beta and alpha subunits. This Coxiella burnetii (strain CbuK_Q154) (Coxiella burnetii (strain Q154)) protein is DNA-directed RNA polymerase subunit omega.